Consider the following 145-residue polypeptide: Peptide methionine sulfoxide reductase MsrB (145 aa).

A MsrB domain is found at 4–127; sequence SDELKQRIGD…NSAALKFIPY (124 aa). The active-site Nucleophile is Cys116.

The protein belongs to the MsrB Met sulfoxide reductase family.

It carries out the reaction L-methionyl-[protein] + [thioredoxin]-disulfide + H2O = L-methionyl-(R)-S-oxide-[protein] + [thioredoxin]-dithiol. The chain is Peptide methionine sulfoxide reductase MsrB from Streptococcus pyogenes serotype M18 (strain MGAS8232).